A 101-amino-acid polypeptide reads, in one-letter code: Small ribosomal subunit protein uS14 (101 aa).

Belongs to the universal ribosomal protein uS14 family. In terms of assembly, part of the 30S ribosomal subunit. Contacts proteins S3 and S10.

Functionally, binds 16S rRNA, required for the assembly of 30S particles and may also be responsible for determining the conformation of the 16S rRNA at the A site. This chain is Small ribosomal subunit protein uS14, found in Cereibacter sphaeroides (strain ATCC 17029 / ATH 2.4.9) (Rhodobacter sphaeroides).